The chain runs to 194 residues: Imidazoleglycerol-phosphate dehydratase (194 aa).

The protein belongs to the imidazoleglycerol-phosphate dehydratase family.

Its subcellular location is the cytoplasm. The enzyme catalyses D-erythro-1-(imidazol-4-yl)glycerol 3-phosphate = 3-(imidazol-4-yl)-2-oxopropyl phosphate + H2O. The protein operates within amino-acid biosynthesis; L-histidine biosynthesis; L-histidine from 5-phospho-alpha-D-ribose 1-diphosphate: step 6/9. The protein is Imidazoleglycerol-phosphate dehydratase of Lacticaseibacillus casei (strain BL23) (Lactobacillus casei).